A 675-amino-acid chain; its full sequence is DNA ligase 1 (675 aa).

NAD(+)-binding positions include 34-38 (DFEYD), 83-84 (SL), and glutamate 114. Lysine 116 functions as the N6-AMP-lysine intermediate in the catalytic mechanism. NAD(+) is bound by residues arginine 137, glutamate 177, lysine 295, and lysine 319. Zn(2+) is bound by residues cysteine 413, cysteine 416, cysteine 431, and cysteine 436. The BRCT domain maps to 596–675 (NSGSALAGKT…AEFLRLLSGG (80 aa)).

Belongs to the NAD-dependent DNA ligase family. LigA subfamily. It depends on Mg(2+) as a cofactor. Mn(2+) serves as cofactor.

It carries out the reaction NAD(+) + (deoxyribonucleotide)n-3'-hydroxyl + 5'-phospho-(deoxyribonucleotide)m = (deoxyribonucleotide)n+m + AMP + beta-nicotinamide D-nucleotide.. Functionally, DNA ligase that catalyzes the formation of phosphodiester linkages between 5'-phosphoryl and 3'-hydroxyl groups in double-stranded DNA using NAD as a coenzyme and as the energy source for the reaction. It is essential for DNA replication and repair of damaged DNA. The protein is DNA ligase 1 of Opitutus terrae (strain DSM 11246 / JCM 15787 / PB90-1).